A 172-amino-acid chain; its full sequence is Phosphopantetheine adenylyltransferase (172 aa).

Residue T13 participates in substrate binding. ATP contacts are provided by residues 13–14 (TF) and H21. 3 residues coordinate substrate: K45, L81, and R95. Residues 96 to 98 (GLR), E106, and 131 to 137 (SQFISSR) each bind ATP.

It belongs to the bacterial CoaD family. As to quaternary structure, homohexamer. Mg(2+) serves as cofactor.

The protein resides in the cytoplasm. It carries out the reaction (R)-4'-phosphopantetheine + ATP + H(+) = 3'-dephospho-CoA + diphosphate. It functions in the pathway cofactor biosynthesis; coenzyme A biosynthesis; CoA from (R)-pantothenate: step 4/5. In terms of biological role, reversibly transfers an adenylyl group from ATP to 4'-phosphopantetheine, yielding dephospho-CoA (dPCoA) and pyrophosphate. This Rhodospirillum rubrum (strain ATCC 11170 / ATH 1.1.1 / DSM 467 / LMG 4362 / NCIMB 8255 / S1) protein is Phosphopantetheine adenylyltransferase.